The sequence spans 779 residues: Polyribonucleotide nucleotidyltransferase (779 aa).

Residues D490 and D496 each coordinate Mg(2+). The KH domain occupies 557 to 618; sequence PHILSLKINP…EAVKARIEAV (62 aa). Residues 625–693 enclose the S1 motif domain; sequence GEEFEGTVVK…DRGKIDLIRP (69 aa). Residues 699-752 show a composition bias toward basic and acidic residues; sequence VPLREPRAPRGGDRGPRRDSDRGGDRGPRREFSDRGPRPEGARSERPEGQRTER. The disordered stretch occupies residues 699–779; sequence VPLREPRAPR…AAPVFPRRED (81 aa). Over residues 757-767 the composition is skewed to polar residues; sequence PATQESSQSSD.

It belongs to the polyribonucleotide nucleotidyltransferase family. Mg(2+) is required as a cofactor.

The protein resides in the cytoplasm. The catalysed reaction is RNA(n+1) + phosphate = RNA(n) + a ribonucleoside 5'-diphosphate. In terms of biological role, involved in mRNA degradation. Catalyzes the phosphorolysis of single-stranded polyribonucleotides processively in the 3'- to 5'-direction. The chain is Polyribonucleotide nucleotidyltransferase from Deinococcus radiodurans (strain ATCC 13939 / DSM 20539 / JCM 16871 / CCUG 27074 / LMG 4051 / NBRC 15346 / NCIMB 9279 / VKM B-1422 / R1).